Consider the following 226-residue polypeptide: 3-dehydroquinate dehydratase (226 aa).

3-dehydroquinate contacts are provided by residues 30 to 32 (EWR) and arginine 62. The Proton donor/acceptor role is filled by histidine 118. The active-site Schiff-base intermediate with substrate is the lysine 143. Residues arginine 186, serine 205, and glutamine 209 each coordinate 3-dehydroquinate.

Belongs to the type-I 3-dehydroquinase family. Homodimer.

The catalysed reaction is 3-dehydroquinate = 3-dehydroshikimate + H2O. It participates in metabolic intermediate biosynthesis; chorismate biosynthesis; chorismate from D-erythrose 4-phosphate and phosphoenolpyruvate: step 3/7. Functionally, involved in the third step of the chorismate pathway, which leads to the biosynthesis of aromatic amino acids. Catalyzes the cis-dehydration of 3-dehydroquinate (DHQ) and introduces the first double bond of the aromatic ring to yield 3-dehydroshikimate. The protein is 3-dehydroquinate dehydratase of Streptococcus equi subsp. zooepidemicus (strain H70).